Here is a 259-residue protein sequence, read N- to C-terminus: Ras-related protein Rab-34 (259 aa).

Methionine 1 is modified (N-acetylmethionine). GTP is bound by residues serine 62, valine 63, glycine 64, lysine 65, threonine 66, aspartate 78, tyrosine 81, and threonine 84. Mg(2+) is bound at residue threonine 66. Residues 71 to 89 carry the Switch 1 motif; sequence RFCKDTFDKNYKATIGVDF. Threonine 84 and aspartate 107 together coordinate Mg(2+). Positions 108–127 match the Switch 2 motif; sequence TAGQERFKCIASTYYRGAQA. GTP is bound by residues glycine 110, lysine 167, aspartate 169, and serine 198. Phosphoserine is present on serine 241. S-geranylgeranyl cysteine attachment occurs at residues cysteine 257 and cysteine 258.

This sequence belongs to the small GTPase superfamily. Rab family. In terms of assembly, interacts with RILP. The GTP-bound form interacts with REP15. The cofactor is Mg(2+).

The protein resides in the cytoplasm. It is found in the golgi apparatus. The protein localises to the cytoplasmic vesicle. Its subcellular location is the phagosome. It localises to the phagosome membrane. The protein resides in the cell projection. It is found in the cilium. The protein localises to the cytoskeleton. Its subcellular location is the microtubule organizing center. It localises to the centrosome. The protein resides in the centriole. The catalysed reaction is GTP + H2O = GDP + phosphate + H(+). Its activity is regulated as follows. Regulated by guanine nucleotide exchange factors (GEFs) which promote the exchange of bound GDP for free GTP. Regulated by GTPase activating proteins (GAPs) which increase the GTP hydrolysis activity. Inhibited by GDP dissociation inhibitors (GDIs). The small GTPases Rab are key regulators of intracellular membrane trafficking, from the formation of transport vesicles to their fusion with membranes. Rabs cycle between an inactive GDP-bound form and an active GTP-bound form that is able to recruit to membranes different sets of downstream effectors directly responsible for vesicle formation, movement, tethering and fusion. RAB34 transports protein involved in the redistribution of lysosomes to the peri-Golgi region. Plays a role in the maturation of phagosomes that engulf pathogens, such as S.aureus and M.tuberculosis. Plays a role in the fusion of phagosomes with lysosomes. Involved in ciliogenesis. In particular, it is required for early steps of the intracellular cilium assembly pathway initiated by trafficking and docking of ciliary vesicles to the centrioles in the cytoplasm, followed by axoneme formation in the cytoplasm. After axoneme elongation, the centrioles migrate close to the cell surface so that ciliary vesicles can fuse with the plasma membrane to expose cilia to the extracellular space. It seems dispensable for ciliogenesis via the extracellular pathway where cilium assembly begins after migration and docking of the centriole to the plasma membrane. Also acts as a positive regulator of hedgehog signaling and regulates ciliary function. This chain is Ras-related protein Rab-34, found in Rattus norvegicus (Rat).